A 189-amino-acid chain; its full sequence is Parkinson disease protein 7 homolog (189 aa).

N-acetylalanine is present on Ala-2. S-palmitoyl cysteine attachment occurs at residues Cys-46 and Cys-53. A Phosphotyrosine modification is found at Tyr-67. Cys-106 (nucleophile) is an active-site residue. A Cysteine sulfinic acid (-SO2H); alternate modification is found at Cys-106. The S-palmitoyl cysteine; alternate moiety is linked to residue Cys-106. The active site involves His-126. Lys-130 participates in a covalent cross-link: Glycyl lysine isopeptide (Lys-Gly) (interchain with G-Cter in SUMO). Residue Lys-148 is modified to N6-acetyllysine. Residue Lys-182 is modified to N6-succinyllysine.

The protein belongs to the peptidase C56 family. Homodimer. Binds EFCAB6/DJBP and PIAS2. Part of a ternary complex containing PARK7, EFCAB6/DJBP and AR. Interacts (via N-terminus) with OTUD7B. Interacts with BBS1, HIPK1, CLCF1 and MTERF. Forms a complex with PINK1 and PRKN. Interacts (via C-terminus) with NCF1; the interaction is enhanced by LPS and modulates NCF1 phosphorylation and membrane translocation. Interacts with NENF. It depends on Deglycase activity does not require glutathione as a cofactor, however, glycated glutathione constitutes a PARK7 substrate. as a cofactor. Sumoylated on Lys-130 by PIAS2 or PIAS4; which is essential for cell-growth promoting activity and transforming activity. In terms of processing, undergoes cleavage of a C-terminal peptide and subsequent activation of protease activity in response to oxidative stress. As to expression, ubiquitous. Detected on epididymal sperm. Highly expressed in testis and prostate. Detected at lower levels in heart, lung, brain, liver, kidney, seminal vesicle, caput and corpus epididymis.

Its subcellular location is the cell membrane. The protein localises to the cytoplasm. It is found in the membrane raft. The protein resides in the nucleus. It localises to the mitochondrion. Its subcellular location is the endoplasmic reticulum. It carries out the reaction N(omega)-(1-hydroxy-2-oxopropyl)-L-arginyl-[protein] + H2O = lactate + L-arginyl-[protein] + H(+). The enzyme catalyses N(6)-(1-hydroxy-2-oxopropyl)-L-lysyl-[protein] + H2O = lactate + L-lysyl-[protein] + H(+). The catalysed reaction is S-(1-hydroxy-2-oxopropyl)-L-cysteinyl-[protein] + H2O = lactate + L-cysteinyl-[protein] + H(+). It catalyses the reaction N(omega)-(1-hydroxy-2-oxoethyl)-L-arginyl-[protein] + H2O = L-arginyl-[protein] + glycolate + H(+). It carries out the reaction N(6)-(1-hydroxy-2-oxoethyl)-L-lysyl-[protein] + H2O = glycolate + L-lysyl-[protein] + H(+). The enzyme catalyses S-(1-hydroxy-2-oxoethyl)-L-cysteinyl-[protein] + H2O = glycolate + L-cysteinyl-[protein] + H(+). The catalysed reaction is N(2)-(1-hydroxy-2-oxopropyl)-dGTP + H2O = lactate + dGTP + H(+). It catalyses the reaction N(2)-(1-hydroxy-2-oxopropyl)-GTP + H2O = lactate + GTP + H(+). It carries out the reaction N(2)-(1-hydroxy-2-oxopropyl)-GDP + H2O = lactate + GDP + H(+). The enzyme catalyses N(2)-(1-hydroxy-2-oxopropyl)-GMP + H2O = lactate + GMP + H(+). The catalysed reaction is N(2)-(1-hydroxy-2-oxoethyl)-dGTP + H2O = dGTP + glycolate + H(+). It catalyses the reaction N(2)-(1-hydroxy-2-oxoethyl)-GTP + H2O = glycolate + GTP + H(+). It carries out the reaction N(2)-(1-hydroxy-2-oxoethyl)-GDP + H2O = glycolate + GDP + H(+). The enzyme catalyses N(2)-(1-hydroxy-2-oxoethyl)-GMP + H2O = glycolate + GMP + H(+). The catalysed reaction is an N(2)-(1-hydroxy-2-oxopropyl)-guanosine in RNA + H2O = a guanosine in RNA + lactate + H(+). It catalyses the reaction an N(2)-(1-hydroxy-2-oxopropyl)-2'-deoxyguanosine in DNA + H2O = a 2'-deoxyguanosine in DNA + lactate + H(+). It carries out the reaction an N(2)-(1-hydroxy-2-oxoethyl)-guanosine in RNA + H2O = a guanosine in RNA + glycolate + H(+). The enzyme catalyses an N(2)-(1-hydroxy-2-oxoethyl)-2'-deoxyguanosine in DNA + H2O = a 2'-deoxyguanosine in DNA + glycolate + H(+). Functionally, protein and nucleotide deglycase that catalyzes the deglycation of the Maillard adducts formed between amino groups of proteins or nucleotides and reactive carbonyl groups of glyoxals. Thus, functions as a protein deglycase that repairs methylglyoxal- and glyoxal-glycated proteins, and releases repaired proteins and lactate or glycolate, respectively. Deglycates cysteine, arginine and lysine residues in proteins, and thus reactivates these proteins by reversing glycation by glyoxals. Acts on early glycation intermediates (hemithioacetals and aminocarbinols), preventing the formation of advanced glycation endproducts (AGE) that cause irreversible damage. Also functions as a nucleotide deglycase able to repair glycated guanine in the free nucleotide pool (GTP, GDP, GMP, dGTP) and in DNA and RNA. Is thus involved in a major nucleotide repair system named guanine glycation repair (GG repair), dedicated to reversing methylglyoxal and glyoxal damage via nucleotide sanitization and direct nucleic acid repair. Also displays an apparent glyoxalase activity that in fact reflects its deglycase activity. Plays an important role in cell protection against oxidative stress and cell death acting as oxidative stress sensor and redox-sensitive chaperone and protease; functions probably related to its primary function. It is involved in neuroprotective mechanisms like the stabilization of NFE2L2 and PINK1 proteins, male fertility as a positive regulator of androgen signaling pathway as well as cell growth and transformation through, for instance, the modulation of NF-kappa-B signaling pathway. Eliminates hydrogen peroxide and protects cells against hydrogen peroxide-induced cell death. Required for correct mitochondrial morphology and function as well as for autophagy of dysfunctional mitochondria. Plays a role in regulating expression or stability of the mitochondrial uncoupling proteins SLC25A14 and SLC25A27 in dopaminergic neurons of the substantia nigra pars compacta and attenuates the oxidative stress induced by calcium entry into the neurons via L-type channels during pacemaking. Regulates astrocyte inflammatory responses, may modulate lipid rafts-dependent endocytosis in astrocytes and neuronal cells. In pancreatic islets, involved in the maintenance of mitochondrial reactive oxygen species (ROS) levels and glucose homeostasis in an age- and diet dependent manner. Protects pancreatic beta cells from cell death induced by inflammatory and cytotoxic setting. Binds to a number of mRNAs containing multiple copies of GG or CC motifs and partially inhibits their translation but dissociates following oxidative stress. Metal-binding protein able to bind copper as well as toxic mercury ions, enhances the cell protection mechanism against induced metal toxicity. In macrophages, interacts with the NADPH oxidase subunit NCF1 to direct NADPH oxidase-dependent ROS production, and protects against sepsis. This is Parkinson disease protein 7 homolog from Rattus norvegicus (Rat).